The primary structure comprises 166 residues: Putative transmembrane protein ORF166 (166 aa).

Transmembrane regions (helical) follow at residues 35–55 (IILV…FAGL), 60–80 (PICV…FVTA), and 124–144 (IFCL…AFIN).

It localises to the host membrane. This chain is Putative transmembrane protein ORF166, found in Acidianus convivator (ABV).